We begin with the raw amino-acid sequence, 574 residues long: Serine/threonine-protein kinase fray1 (574 aa).

The span at 24–41 shows a compositional bias: basic and acidic residues; it reads NHHDLPDSDSDSSSREEE. The segment at 24–64 is disordered; sequence NHHDLPDSDSDSSSREEELMNSSGGGNGKEPIGEKKKLPSH. In terms of domain architecture, Protein kinase spans 97-357; it reads YNLIEPIGEG…ASKLLEHKVF (261 aa). Residues 103–111 and Lys-126 contribute to the ATP site; that span reads IGEGTEGRV. Asp-221 functions as the Proton acceptor in the catalytic mechanism. A Phosphothreonine; by autocatalysis modification is found at Thr-256. 3 disordered regions span residues 381–447, 462–514, and 532–554; these read YRES…LVNM, LSSG…PEKE, and FGSP…HEHH. Composition is skewed to low complexity over residues 386-403, 418-441, and 462-475; these read SPAS…PSSP, KNIK…NLSN, and LSSG…SSDL. Residues 478-491 are compositionally biased toward basic residues; the sequence is GHLHKIGTPKKKHS. Over residues 492–506 the composition is skewed to low complexity; that stretch reads PSGSIGDSHGSISPP. The segment covering 536–553 has biased composition (basic and acidic residues); that stretch reads KEGDHNHQHHKSEGDHEH.

The protein belongs to the protein kinase superfamily. STE Ser/Thr protein kinase family. STE20 subfamily. It depends on Mn(2+) as a cofactor. Undergoes autophosphorylation in the catalytic domain.

The catalysed reaction is L-seryl-[protein] + ATP = O-phospho-L-seryl-[protein] + ADP + H(+). It carries out the reaction L-threonyl-[protein] + ATP = O-phospho-L-threonyl-[protein] + ADP + H(+). In Dictyostelium discoideum (Social amoeba), this protein is Serine/threonine-protein kinase fray1.